The sequence spans 265 residues: Shikimate dehydrogenase (NADP(+)) (265 aa).

Residues 15–17 and Thr62 contribute to the shikimate site; that span reads SLS. The active-site Proton acceptor is Lys66. 2 residues coordinate shikimate: Asn87 and Asp102. NADP(+)-binding positions include 125 to 129, 149 to 154, and Leu209; these read GAGGA and NRTLEK. Position 211 (Tyr211) interacts with shikimate. NADP(+) is bound at residue Gly233.

This sequence belongs to the shikimate dehydrogenase family. Homodimer.

It carries out the reaction shikimate + NADP(+) = 3-dehydroshikimate + NADPH + H(+). It participates in metabolic intermediate biosynthesis; chorismate biosynthesis; chorismate from D-erythrose 4-phosphate and phosphoenolpyruvate: step 4/7. In terms of biological role, involved in the biosynthesis of the chorismate, which leads to the biosynthesis of aromatic amino acids. Catalyzes the reversible NADPH linked reduction of 3-dehydroshikimate (DHSA) to yield shikimate (SA). The sequence is that of Shikimate dehydrogenase (NADP(+)) from Legionella pneumophila (strain Lens).